Here is a 40-residue protein sequence, read N- to C-terminus: Photosystem II reaction center protein J (40 aa).

A helical transmembrane segment spans residues 8-28 (IPLWLISTVTGTLVIGLMGIF).

This sequence belongs to the PsbJ family. As to quaternary structure, PSII is composed of 1 copy each of membrane proteins PsbA, PsbB, PsbC, PsbD, PsbE, PsbF, PsbH, PsbI, PsbJ, PsbK, PsbL, PsbM, PsbT, PsbX, PsbY, PsbZ, Psb30/Ycf12, at least 3 peripheral proteins of the oxygen-evolving complex and a large number of cofactors. It forms dimeric complexes.

The protein localises to the plastid. The protein resides in the chloroplast thylakoid membrane. Functionally, one of the components of the core complex of photosystem II (PSII). PSII is a light-driven water:plastoquinone oxidoreductase that uses light energy to abstract electrons from H(2)O, generating O(2) and a proton gradient subsequently used for ATP formation. It consists of a core antenna complex that captures photons, and an electron transfer chain that converts photonic excitation into a charge separation. The sequence is that of Photosystem II reaction center protein J from Ginkgo biloba (Ginkgo).